The chain runs to 150 residues: MGRVRLASQRHRVRIAALQILFEVDETDHAIDQVLERRLTDEPMSAESAEFLRRLVFGTWEHRSYLDRIIEEAAPNWPVNQMPGVDKAVLRIALFELLIDEVEKTPIKAVINEAVELAKEFGSDNSSRFVNGVLGTVVTRYLAEREANEE.

The protein belongs to the NusB family.

Its function is as follows. Involved in transcription antitermination. Required for transcription of ribosomal RNA (rRNA) genes. Binds specifically to the boxA antiterminator sequence of the ribosomal RNA (rrn) operons. The protein is Transcription antitermination protein NusB of Chloroflexus aggregans (strain MD-66 / DSM 9485).